Consider the following 241-residue polypeptide: uncharacterized protein (241 aa).

The interval 19–53 (KRIGYGMGEKSSAGSSRDQTYSVKPASDVKDKKKV) is disordered. The span at 30–39 (SAGSSRDQTY) shows a compositional bias: polar residues.

This is an uncharacterized protein from Ostreid herpesvirus 1 (isolate France) (OsHV-1).